The primary structure comprises 244 residues: 5-oxoprolinase subunit A (244 aa).

It belongs to the LamB/PxpA family. In terms of assembly, forms a complex composed of PxpA, PxpB and PxpC.

The catalysed reaction is 5-oxo-L-proline + ATP + 2 H2O = L-glutamate + ADP + phosphate + H(+). Catalyzes the cleavage of 5-oxoproline to form L-glutamate coupled to the hydrolysis of ATP to ADP and inorganic phosphate. The polypeptide is 5-oxoprolinase subunit A (Shigella sonnei (strain Ss046)).